Here is a 360-residue protein sequence, read N- to C-terminus: Photosystem II protein D1 (360 aa).

A run of 3 helical transmembrane segments spans residues 29–46 (YIGW…TAAS), 118–133 (HFLI…EWEL), and 142–156 (WIFV…AASA). A chlorophyll a-binding site is contributed by H118. W126 lines the pheophytin a pocket. [CaMn4O5] cluster contacts are provided by D170 and E189. Residues 197 to 218 (FHMAGVAGVFGGSLFSAMHGSL) form a helical membrane-spanning segment. H198 serves as a coordination point for chlorophyll a. A quinone-binding positions include H215 and 264–265 (SF). Position 215 (H215) interacts with Fe cation. H272 contributes to the Fe cation binding site. Residues 274-288 (FLAAWPVVGIWLTAL) traverse the membrane as a helical segment. 4 residues coordinate [CaMn4O5] cluster: H332, E333, D342, and A344. Residues 345–360 (SNEILPVAISAPSVVG) constitute a propeptide that is removed on maturation.

Belongs to the reaction center PufL/M/PsbA/D family. PSII is composed of 1 copy each of membrane proteins PsbA, PsbB, PsbC, PsbD, PsbE, PsbF, PsbH, PsbI, PsbJ, PsbK, PsbL, PsbM, PsbT, PsbX, PsbY, PsbZ, Psb30/Ycf12, at least 3 peripheral proteins of the oxygen-evolving complex and a large number of cofactors. It forms dimeric complexes. The D1/D2 heterodimer binds P680, chlorophylls that are the primary electron donor of PSII, and subsequent electron acceptors. It shares a non-heme iron and each subunit binds pheophytin, quinone, additional chlorophylls, carotenoids and lipids. D1 provides most of the ligands for the Mn4-Ca-O5 cluster of the oxygen-evolving complex (OEC). There is also a Cl(-1) ion associated with D1 and D2, which is required for oxygen evolution. The PSII complex binds additional chlorophylls, carotenoids and specific lipids. serves as cofactor. Tyr-161 forms a radical intermediate that is referred to as redox-active TyrZ, YZ or Y-Z. In terms of processing, C-terminally processed by CTPA; processing is essential to allow assembly of the oxygen-evolving complex and thus photosynthetic growth.

The protein localises to the plastid. Its subcellular location is the chloroplast thylakoid membrane. The catalysed reaction is 2 a plastoquinone + 4 hnu + 2 H2O = 2 a plastoquinol + O2. In terms of biological role, photosystem II (PSII) is a light-driven water:plastoquinone oxidoreductase that uses light energy to abstract electrons from H(2)O, generating O(2) and a proton gradient subsequently used for ATP formation. It consists of a core antenna complex that captures photons, and an electron transfer chain that converts photonic excitation into a charge separation. The D1/D2 (PsbA/PsbD) reaction center heterodimer binds P680, the primary electron donor of PSII as well as several subsequent electron acceptors. This is Photosystem II protein D1 from Ectocarpus siliculosus (Brown alga).